Reading from the N-terminus, the 212-residue chain is Pyridoxine/pyridoxamine 5'-phosphate oxidase (212 aa).

FMN is bound by residues 59 to 64 (RMVLMK), 74 to 75 (YS), K81, and Q103. K64 lines the substrate pocket. Residues Y121 and R125 each coordinate substrate. Residues 138-139 (QS) and W183 each bind FMN. A substrate-binding site is contributed by 189–191 (RLH). FMN is bound at residue R193.

The protein belongs to the pyridoxamine 5'-phosphate oxidase family. As to quaternary structure, homodimer. The cofactor is FMN.

The catalysed reaction is pyridoxamine 5'-phosphate + O2 + H2O = pyridoxal 5'-phosphate + H2O2 + NH4(+). It carries out the reaction pyridoxine 5'-phosphate + O2 = pyridoxal 5'-phosphate + H2O2. The protein operates within cofactor metabolism; pyridoxal 5'-phosphate salvage; pyridoxal 5'-phosphate from pyridoxamine 5'-phosphate: step 1/1. It functions in the pathway cofactor metabolism; pyridoxal 5'-phosphate salvage; pyridoxal 5'-phosphate from pyridoxine 5'-phosphate: step 1/1. Its function is as follows. Catalyzes the oxidation of either pyridoxine 5'-phosphate (PNP) or pyridoxamine 5'-phosphate (PMP) into pyridoxal 5'-phosphate (PLP). The polypeptide is Pyridoxine/pyridoxamine 5'-phosphate oxidase (Rhodopseudomonas palustris (strain BisB5)).